We begin with the raw amino-acid sequence, 355 residues long: 3-isopropylmalate dehydrogenase (355 aa).

Residue 78–91 (GYKWDNLPRPERPE) participates in NAD(+) binding. Residues Arg-98, Arg-136, and Asp-226 each contribute to the substrate site. Mg(2+) contacts are provided by Asp-226, Asp-250, and Asp-254. 284 to 296 (GSAPDIAGQDKAN) is an NAD(+) binding site.

It belongs to the isocitrate and isopropylmalate dehydrogenases family. LeuB type 1 subfamily. In terms of assembly, homodimer. Mg(2+) serves as cofactor. The cofactor is Mn(2+).

It is found in the cytoplasm. It catalyses the reaction (2R,3S)-3-isopropylmalate + NAD(+) = 4-methyl-2-oxopentanoate + CO2 + NADH. It functions in the pathway amino-acid biosynthesis; L-leucine biosynthesis; L-leucine from 3-methyl-2-oxobutanoate: step 3/4. Functionally, catalyzes the oxidation of 3-carboxy-2-hydroxy-4-methylpentanoate (3-isopropylmalate) to 3-carboxy-4-methyl-2-oxopentanoate. The product decarboxylates to 4-methyl-2 oxopentanoate. This chain is 3-isopropylmalate dehydrogenase (leuB), found in Arthrospira platensis (Spirulina platensis).